We begin with the raw amino-acid sequence, 837 residues long: Protein translocase subunit SecA (837 aa).

ATP contacts are provided by residues glutamine 83, 101-105 (GEGKT), and aspartate 494.

The protein belongs to the SecA family. In terms of assembly, monomer and homodimer. Part of the essential Sec protein translocation apparatus which comprises SecA, SecYEG and auxiliary proteins SecDF. Other proteins may also be involved.

It localises to the cell membrane. The protein resides in the cytoplasm. The catalysed reaction is ATP + H2O + cellular proteinSide 1 = ADP + phosphate + cellular proteinSide 2.. In terms of biological role, part of the Sec protein translocase complex. Interacts with the SecYEG preprotein conducting channel. Has a central role in coupling the hydrolysis of ATP to the transfer of proteins into and across the cell membrane, serving as an ATP-driven molecular motor driving the stepwise translocation of polypeptide chains across the membrane. The polypeptide is Protein translocase subunit SecA (Ureaplasma parvum serovar 3 (strain ATCC 27815 / 27 / NCTC 11736)).